The primary structure comprises 396 residues: Imidazolonepropionase (396 aa).

The Fe(3+) site is built by His70 and His72. Residues His70 and His72 each contribute to the Zn(2+) site. Arg79, Tyr137, and His164 together coordinate 4-imidazolone-5-propanoate. Tyr137 provides a ligand contact to N-formimidoyl-L-glutamate. Residue His227 participates in Fe(3+) binding. Position 227 (His227) interacts with Zn(2+). 4-imidazolone-5-propanoate is bound at residue Gln230. Residue Asp301 participates in Fe(3+) binding. Asp301 provides a ligand contact to Zn(2+). Residues Asn303 and Gly305 each coordinate N-formimidoyl-L-glutamate. Position 306 (Ser306) interacts with 4-imidazolone-5-propanoate.

It belongs to the metallo-dependent hydrolases superfamily. HutI family. It depends on Zn(2+) as a cofactor. Fe(3+) is required as a cofactor.

The protein localises to the cytoplasm. It catalyses the reaction 4-imidazolone-5-propanoate + H2O = N-formimidoyl-L-glutamate. It participates in amino-acid degradation; L-histidine degradation into L-glutamate; N-formimidoyl-L-glutamate from L-histidine: step 3/3. Functionally, catalyzes the hydrolytic cleavage of the carbon-nitrogen bond in imidazolone-5-propanoate to yield N-formimidoyl-L-glutamate. It is the third step in the universal histidine degradation pathway. This is Imidazolonepropionase from Mycolicibacterium smegmatis (strain ATCC 700084 / mc(2)155) (Mycobacterium smegmatis).